The chain runs to 209 residues: Phosphoheptose isomerase (209 aa).

The region spanning 50-209 is the SIS domain; the sequence is IADTFREGGK…ELVEKMMGYD (160 aa). 65–67 lines the substrate pocket; the sequence is NGG. Histidine 74 and glutamate 78 together coordinate Zn(2+). Substrate contacts are provided by residues glutamate 78, 109–110, 135–137, serine 140, and glutamine 188; these read ND and STS. Zn(2+)-binding residues include glutamine 188 and histidine 196.

This sequence belongs to the SIS family. GmhA subfamily. The cofactor is Zn(2+).

The protein localises to the cytoplasm. It catalyses the reaction 2 D-sedoheptulose 7-phosphate = D-glycero-alpha-D-manno-heptose 7-phosphate + D-glycero-beta-D-manno-heptose 7-phosphate. It participates in carbohydrate biosynthesis; D-glycero-D-manno-heptose 7-phosphate biosynthesis; D-glycero-alpha-D-manno-heptose 7-phosphate and D-glycero-beta-D-manno-heptose 7-phosphate from sedoheptulose 7-phosphate: step 1/1. Its function is as follows. Catalyzes the isomerization of sedoheptulose 7-phosphate in D-glycero-D-manno-heptose 7-phosphate. The polypeptide is Phosphoheptose isomerase (Chlorobaculum tepidum (strain ATCC 49652 / DSM 12025 / NBRC 103806 / TLS) (Chlorobium tepidum)).